Reading from the N-terminus, the 113-residue chain is Small ribosomal subunit protein uS17 (113 aa).

This sequence belongs to the universal ribosomal protein uS17 family. In terms of assembly, part of the 30S ribosomal subunit.

Its function is as follows. One of the primary rRNA binding proteins, it binds specifically to the 5'-end of 16S ribosomal RNA. This is Small ribosomal subunit protein uS17 from Sulfurisphaera tokodaii (strain DSM 16993 / JCM 10545 / NBRC 100140 / 7) (Sulfolobus tokodaii).